The following is a 239-amino-acid chain: Peptidyl-tRNA hydrolase (239 aa).

Tyrosine 14 contacts tRNA. The active-site Proton acceptor is the histidine 19. Phenylalanine 64, asparagine 66, and asparagine 112 together coordinate tRNA. The tract at residues 186-239 (RTAPPRPSTGTGRPPAKTPARAEEPPAPAASPAPATAPLPDARSPLQKLVDRFK) is disordered. Over residues 193-204 (STGTGRPPAKTP) the composition is skewed to low complexity. The segment covering 210–222 (PPAPAASPAPATA) has biased composition (pro residues).

The protein belongs to the PTH family. Monomer.

The protein localises to the cytoplasm. It catalyses the reaction an N-acyl-L-alpha-aminoacyl-tRNA + H2O = an N-acyl-L-amino acid + a tRNA + H(+). Functionally, hydrolyzes ribosome-free peptidyl-tRNAs (with 1 or more amino acids incorporated), which drop off the ribosome during protein synthesis, or as a result of ribosome stalling. Its function is as follows. Catalyzes the release of premature peptidyl moieties from peptidyl-tRNA molecules trapped in stalled 50S ribosomal subunits, and thus maintains levels of free tRNAs and 50S ribosomes. This chain is Peptidyl-tRNA hydrolase, found in Ruegeria pomeroyi (strain ATCC 700808 / DSM 15171 / DSS-3) (Silicibacter pomeroyi).